The following is a 361-amino-acid chain: Chorismate synthase (361 aa).

2 residues coordinate NADP(+): Arg48 and Arg54. Residues 125-127, 240-241, Gly286, 301-305, and Arg327 each bind FMN; these read RSS, NA, and KPTSS.

It belongs to the chorismate synthase family. In terms of assembly, homotetramer. FMNH2 is required as a cofactor.

The enzyme catalyses 5-O-(1-carboxyvinyl)-3-phosphoshikimate = chorismate + phosphate. Its pathway is metabolic intermediate biosynthesis; chorismate biosynthesis; chorismate from D-erythrose 4-phosphate and phosphoenolpyruvate: step 7/7. In terms of biological role, catalyzes the anti-1,4-elimination of the C-3 phosphate and the C-6 proR hydrogen from 5-enolpyruvylshikimate-3-phosphate (EPSP) to yield chorismate, which is the branch point compound that serves as the starting substrate for the three terminal pathways of aromatic amino acid biosynthesis. This reaction introduces a second double bond into the aromatic ring system. The sequence is that of Chorismate synthase from Magnetococcus marinus (strain ATCC BAA-1437 / JCM 17883 / MC-1).